We begin with the raw amino-acid sequence, 492 residues long: Catalase isozyme 3 (492 aa).

Active-site residues include histidine 65 and asparagine 138. Tyrosine 348 is a heme binding site.

This sequence belongs to the catalase family. As to quaternary structure, homotetramer. Requires heme as cofactor.

It is found in the peroxisome. It carries out the reaction 2 H2O2 = O2 + 2 H2O. Functionally, occurs in almost all aerobically respiring organisms and serves to protect cells from the toxic effects of hydrogen peroxide. This chain is Catalase isozyme 3 (CAT3), found in Nicotiana plumbaginifolia (Leadwort-leaved tobacco).